The primary structure comprises 193 residues: Large ribosomal subunit protein uL18 (193 aa).

It belongs to the universal ribosomal protein uL18 family. In terms of assembly, part of the 50S ribosomal subunit. Contacts the 5S and 23S rRNAs.

In terms of biological role, this is one of the proteins that bind and probably mediate the attachment of the 5S RNA into the large ribosomal subunit, where it forms part of the central protuberance. This chain is Large ribosomal subunit protein uL18, found in Methanobrevibacter smithii (strain ATCC 35061 / DSM 861 / OCM 144 / PS).